The sequence spans 31 residues: Cytochrome b6-f complex subunit 6 (31 aa).

The chain crosses the membrane as a helical span at residues 4 to 24 (ITSYFGFLLAALTITSALFIG).

It belongs to the PetL family. The 4 large subunits of the cytochrome b6-f complex are cytochrome b6, subunit IV (17 kDa polypeptide, PetD), cytochrome f and the Rieske protein, while the 4 small subunits are PetG, PetL, PetM and PetN. The complex functions as a dimer.

The protein localises to the plastid. Its subcellular location is the chloroplast thylakoid membrane. Functionally, component of the cytochrome b6-f complex, which mediates electron transfer between photosystem II (PSII) and photosystem I (PSI), cyclic electron flow around PSI, and state transitions. PetL is important for photoautotrophic growth as well as for electron transfer efficiency and stability of the cytochrome b6-f complex. This is Cytochrome b6-f complex subunit 6 from Solanum tuberosum (Potato).